Reading from the N-terminus, the 74-residue chain is Ferredoxin-like protein in nif region (74 aa).

Residues 2–30 (PFKIIASQCTSCSACEPLCPNVAISEKGG) form the 4Fe-4S ferredoxin-type domain. The [4Fe-4S] cluster site is built by cysteine 10, cysteine 13, cysteine 16, cysteine 20, cysteine 39, cysteine 51, and cysteine 55.

[4Fe-4S] cluster is required as a cofactor.

This chain is Ferredoxin-like protein in nif region (frxA), found in Bradyrhizobium diazoefficiens (strain JCM 10833 / BCRC 13528 / IAM 13628 / NBRC 14792 / USDA 110).